The chain runs to 483 residues: Altronate oxidoreductase (483 aa).

18–29 (IIQFGEGNFLRA) is an NAD(+) binding site.

This sequence belongs to the mannitol dehydrogenase family. UxaB subfamily.

It carries out the reaction D-altronate + NAD(+) = keto-D-tagaturonate + NADH + H(+). It functions in the pathway carbohydrate metabolism; pentose and glucuronate interconversion. This Escherichia coli O1:K1 / APEC protein is Altronate oxidoreductase.